The chain runs to 348 residues: Protein RecA (348 aa).

An ATP-binding site is contributed by 65 to 72; sequence GPESSGKT.

Belongs to the RecA family.

The protein resides in the cytoplasm. Can catalyze the hydrolysis of ATP in the presence of single-stranded DNA, the ATP-dependent uptake of single-stranded DNA by duplex DNA, and the ATP-dependent hybridization of homologous single-stranded DNAs. It interacts with LexA causing its activation and leading to its autocatalytic cleavage. This chain is Protein RecA, found in Vibrio anguillarum (strain ATCC 68554 / 775) (Listonella anguillarum).